The chain runs to 92 residues: Probable Fe(2+)-trafficking protein (92 aa).

Belongs to the Fe(2+)-trafficking protein family.

Its function is as follows. Could be a mediator in iron transactions between iron acquisition and iron-requiring processes, such as synthesis and/or repair of Fe-S clusters in biosynthetic enzymes. This Shewanella sp. (strain ANA-3) protein is Probable Fe(2+)-trafficking protein.